We begin with the raw amino-acid sequence, 73 residues long: Large ribosomal subunit protein bL28 (73 aa).

Belongs to the bacterial ribosomal protein bL28 family.

The polypeptide is Large ribosomal subunit protein bL28 (Fervidobacterium nodosum (strain ATCC 35602 / DSM 5306 / Rt17-B1)).